The following is a 59-amino-acid chain: Zinc finger protein HVO_2753 (59 aa).

4 consecutive short sequence motifs (c(P)XCG motif) follow at residues 12–16, 29–33, 39–43, and 51–55; these read CVSCG, CPDCG, and CSKCR. Cysteine 29 and cysteine 32 together coordinate Zn(2+). The Zn(2+) site is built by cysteine 51 and cysteine 54.

In terms of assembly, monomer in solution.

In terms of biological role, zinc-binding protein that binds only one zinc ion. Is required for swarming and biofilm formation. This chain is Zinc finger protein HVO_2753, found in Haloferax volcanii (strain ATCC 29605 / DSM 3757 / JCM 8879 / NBRC 14742 / NCIMB 2012 / VKM B-1768 / DS2) (Halobacterium volcanii).